Reading from the N-terminus, the 245-residue chain is Adapter protein MecA (245 aa).

It belongs to the MecA family. In terms of assembly, homodimer.

In terms of biological role, enables the recognition and targeting of unfolded and aggregated proteins to the ClpC protease or to other proteins involved in proteolysis. This is Adapter protein MecA from Streptococcus pneumoniae serotype 4 (strain ATCC BAA-334 / TIGR4).